Consider the following 456-residue polypeptide: Bifunctional protein GlmU (456 aa).

The interval 1-229 is pyrophosphorylase; that stretch reads MSNSAMSVVI…LSEVEGVNNR (229 aa). Residues 11-14, K25, Q76, 81-82, 103-105, G140, E154, N169, and N227 each bind UDP-N-acetyl-alpha-D-glucosamine; these read LAAG, GT, and YGD. D105 serves as a coordination point for Mg(2+). N227 provides a ligand contact to Mg(2+). Positions 230–250 are linker; sequence LQLSRLERIYQAEQSEKLLLA. The tract at residues 251–456 is N-acetyltransferase; that stretch reads GVMLLDPARF…QGWQRPVKKK (206 aa). UDP-N-acetyl-alpha-D-glucosamine is bound by residues R333 and K351. H363 (proton acceptor) is an active-site residue. The UDP-N-acetyl-alpha-D-glucosamine site is built by Y366 and N377. Residues A380, 386-387, S405, A423, and R440 each bind acetyl-CoA; that span reads NY.

In the N-terminal section; belongs to the N-acetylglucosamine-1-phosphate uridyltransferase family. This sequence in the C-terminal section; belongs to the transferase hexapeptide repeat family. As to quaternary structure, homotrimer. Requires Mg(2+) as cofactor.

It is found in the cytoplasm. It catalyses the reaction alpha-D-glucosamine 1-phosphate + acetyl-CoA = N-acetyl-alpha-D-glucosamine 1-phosphate + CoA + H(+). The enzyme catalyses N-acetyl-alpha-D-glucosamine 1-phosphate + UTP + H(+) = UDP-N-acetyl-alpha-D-glucosamine + diphosphate. Its pathway is nucleotide-sugar biosynthesis; UDP-N-acetyl-alpha-D-glucosamine biosynthesis; N-acetyl-alpha-D-glucosamine 1-phosphate from alpha-D-glucosamine 6-phosphate (route II): step 2/2. It functions in the pathway nucleotide-sugar biosynthesis; UDP-N-acetyl-alpha-D-glucosamine biosynthesis; UDP-N-acetyl-alpha-D-glucosamine from N-acetyl-alpha-D-glucosamine 1-phosphate: step 1/1. The protein operates within bacterial outer membrane biogenesis; LPS lipid A biosynthesis. Its function is as follows. Catalyzes the last two sequential reactions in the de novo biosynthetic pathway for UDP-N-acetylglucosamine (UDP-GlcNAc). The C-terminal domain catalyzes the transfer of acetyl group from acetyl coenzyme A to glucosamine-1-phosphate (GlcN-1-P) to produce N-acetylglucosamine-1-phosphate (GlcNAc-1-P), which is converted into UDP-GlcNAc by the transfer of uridine 5-monophosphate (from uridine 5-triphosphate), a reaction catalyzed by the N-terminal domain. In Serratia proteamaculans (strain 568), this protein is Bifunctional protein GlmU.